The following is a 145-amino-acid chain: 3-hydroxyacyl-[acyl-carrier-protein] dehydratase FabZ (145 aa).

The active site involves H49.

It belongs to the thioester dehydratase family. FabZ subfamily.

Its subcellular location is the cytoplasm. The catalysed reaction is a (3R)-hydroxyacyl-[ACP] = a (2E)-enoyl-[ACP] + H2O. Involved in unsaturated fatty acids biosynthesis. Catalyzes the dehydration of short chain beta-hydroxyacyl-ACPs and long chain saturated and unsaturated beta-hydroxyacyl-ACPs. This Rickettsia akari (strain Hartford) protein is 3-hydroxyacyl-[acyl-carrier-protein] dehydratase FabZ.